Consider the following 536-residue polypeptide: MSPHRETTGDESTTTTVPQNGTNGAAAPELVAVPTNGAAVKAPETLAVQNGANSRVKPIQRSSHLVAADLDGEFDLICVGFGPASLSVAIALHDTLAAGKKLRPDGSSPKVLFLEKQTRFAWHAGMLLPGAKMQISFIKDLATLRDPRSHFTFLNYLHQHDRLVDFTNLSTFLPARVEYEDYMRWCSAHFEHLAQYDHEVVSVTPAVKKADTVKLFAVEARNNVNGQVQTFRGRNIMLATGGKPSFPKSFPVKHPRILHSSQYAYMVPQILTDKNAAYKVVVVGAGQSAAEIFHNIQNLYPNSSTQLVMRQEFLKPSDDSPFVNSIFNPEYIDALFPKSAKGRSEFLVDARATNYGVVRLELIEELFERMYAQKRVLGPDERTWPHRIMGCRQISNIEPHGDRLEVKIHGLSDGVVNSADEEILSADLIIAATGYQRNAHIDMLKSTWEMLPKAVPGTAMFNKGVTGWNVDTEQGERKLAVGRDYRVQYKAGSVAGDAGIWLQGCCEGTHGLSDTLLSVLATRSGEMVQSIFGTEH.

A disordered region spans residues 1-25 (MSPHRETTGDESTTTTVPQNGTNGA). Residues 115 to 123 (EKQTRFAWH) and Gln-134 each bind FAD. Residue Lys-139 participates in L-ornithine binding. Residue Val-200 coordinates FAD. An NADP(+)-binding site is contributed by Arg-310. L-ornithine contacts are provided by residues 324-327 (NSIF) and Asn-354. An FAD-binding site is contributed by 515 to 517 (TLL). Ser-518 lines the L-ornithine pocket.

It belongs to the lysine N(6)-hydroxylase/L-ornithine N(5)-oxygenase family. Homotetramer. FAD serves as cofactor.

The enzyme catalyses L-ornithine + NADH + O2 = N(5)-hydroxy-L-ornithine + NAD(+) + H2O. The catalysed reaction is L-ornithine + NADPH + O2 = N(5)-hydroxy-L-ornithine + NADP(+) + H2O. It functions in the pathway siderophore biosynthesis. Its function is as follows. L-ornithine N(5)-monooxygenase; part of the gene cluster that mediates the biosynthesis of at least 11 siderophores, including beauverichelin A, dimerumic acid (DA), Na-dimethyl coprogen (NADC), eleutherazine B, ferricrocin (FC), fusarinine A, fusarinine C (FsC), metachelin A, mevalonolactone, rhodotorulic acid (RA) and tenellin. This cocktail of siderophores for iron metabolism is essential for virulence, and more specifically for the fungal virulence in penetrating through the host cuticle. Siderophore synthesis is also involved in conidial germination under iron-deficient conditions. SIDA initiates the biosynthesis of these siderophores with the enzymatic hydroxylation of ornithine. SIDA is indispensable for the production of most siderophores including fusarinine C and ferricrocin but not mevalonolactone and eleutherazine B. However, SIDA mediates the metabolic interplay between synthesis of mevalonolactone and eleutherazine B and other siderophores. This Beauveria bassiana (strain ARSEF 2860) (White muscardine disease fungus) protein is L-ornithine N(5)-monooxygenase SIDA.